The following is a 314-amino-acid chain: tRNA uridine(34) hydroxylase (314 aa).

The 95-residue stretch at 135 to 229 (ADPETLVIDT…YLEQIPAEES (95 aa)) folds into the Rhodanese domain. The active-site Cysteine persulfide intermediate is the Cys-189.

Belongs to the TrhO family.

The catalysed reaction is uridine(34) in tRNA + AH2 + O2 = 5-hydroxyuridine(34) in tRNA + A + H2O. Its function is as follows. Catalyzes oxygen-dependent 5-hydroxyuridine (ho5U) modification at position 34 in tRNAs. The protein is tRNA uridine(34) hydroxylase of Sinorhizobium fredii (strain NBRC 101917 / NGR234).